The primary structure comprises 329 residues: GTP 3',8-cyclase (329 aa).

The Radical SAM core domain occupies 8–234 (AFARKFYYLR…QLRQRSDGPA (227 aa)). Residue Arg17 participates in GTP binding. Positions 24 and 28 each coordinate [4Fe-4S] cluster. Tyr30 serves as a coordination point for S-adenosyl-L-methionine. A [4Fe-4S] cluster-binding site is contributed by Cys31. Arg68 provides a ligand contact to GTP. Residue Gly72 coordinates S-adenosyl-L-methionine. GTP is bound at residue Thr99. S-adenosyl-L-methionine is bound at residue Ser123. Lys160 lines the GTP pocket. Residue Met194 coordinates S-adenosyl-L-methionine. [4Fe-4S] cluster is bound by residues Cys257 and Cys260. Position 262-264 (262-264 (RLR)) interacts with GTP. Cys274 serves as a coordination point for [4Fe-4S] cluster.

It belongs to the radical SAM superfamily. MoaA family. As to quaternary structure, monomer and homodimer. The cofactor is [4Fe-4S] cluster.

It catalyses the reaction GTP + AH2 + S-adenosyl-L-methionine = (8S)-3',8-cyclo-7,8-dihydroguanosine 5'-triphosphate + 5'-deoxyadenosine + L-methionine + A + H(+). It functions in the pathway cofactor biosynthesis; molybdopterin biosynthesis. Its function is as follows. Catalyzes the cyclization of GTP to (8S)-3',8-cyclo-7,8-dihydroguanosine 5'-triphosphate. The chain is GTP 3',8-cyclase from Salmonella paratyphi B (strain ATCC BAA-1250 / SPB7).